Here is a 465-residue protein sequence, read N- to C-terminus: Cysteine--tRNA ligase (465 aa).

Cys27 contributes to the Zn(2+) binding site. Positions 29–39 (PTVYNYIHIGN) match the 'HIGH' region motif. Zn(2+)-binding residues include Cys207, His232, and Glu236. The 'KMSKS' region signature appears at 264 to 268 (KMSKS). Lys267 is an ATP binding site.

It belongs to the class-I aminoacyl-tRNA synthetase family. Monomer. Zn(2+) is required as a cofactor.

It localises to the cytoplasm. The catalysed reaction is tRNA(Cys) + L-cysteine + ATP = L-cysteinyl-tRNA(Cys) + AMP + diphosphate. The chain is Cysteine--tRNA ligase from Clostridioides difficile (strain 630) (Peptoclostridium difficile).